The sequence spans 561 residues: 4-coumarate--CoA ligase 1 (561 aa).

ATP contacts are provided by Ser-210, Ser-211, Gly-212, Thr-213, Thr-214, and Lys-218. The (E)-4-coumaroyl-AMP site is built by Tyr-260 and Ser-264. Residue Lys-281 coordinates CoA. The tract at residues 283–352 (EINLLLELIQ…AKFPNAKLGQ (70 aa)) is SBD1. (E)-4-coumaroyl-AMP is bound by residues Ala-330, Gln-352, Gly-353, Thr-357, and Met-365. 3 residues coordinate ATP: Gln-352, Gly-353, and Thr-357. The segment at 353–420 (GYGMTEAGPV…IRGHQIMKGY (68 aa)) is SBD2. ATP contacts are provided by Asp-441 and Arg-456. (E)-4-coumaroyl-AMP contacts are provided by Lys-458 and Lys-462. CoA is bound by residues Lys-464 and Gly-465. Lys-547 is an ATP binding site.

The protein belongs to the ATP-dependent AMP-binding enzyme family. It depends on Mg(2+) as a cofactor. As to expression, preferentially expressed in roots, bolting stems and siliques. Also detected in leaves.

The enzyme catalyses (E)-4-coumarate + ATP + CoA = (E)-4-coumaroyl-CoA + AMP + diphosphate. It carries out the reaction (E)-caffeate + ATP + CoA = (E)-caffeoyl-CoA + AMP + diphosphate. It catalyses the reaction (E)-ferulate + ATP + CoA = (E)-feruloyl-CoA + AMP + diphosphate. The catalysed reaction is (E)-4-coumarate + ATP + H(+) = (E)-4-coumaroyl-AMP + diphosphate. The enzyme catalyses (E)-4-coumaroyl-AMP + CoA = (E)-4-coumaroyl-CoA + AMP + H(+). It carries out the reaction (E)-caffeate + ATP + H(+) = (E)-caffeoyl-AMP + diphosphate. It catalyses the reaction (E)-caffeoyl-AMP + CoA = (E)-caffeoyl-CoA + AMP + H(+). The catalysed reaction is (E)-ferulate + ATP + H(+) = (E)-feruloyl-AMP + diphosphate. The enzyme catalyses (E)-feruloyl-AMP + CoA = (E)-feruloyl-CoA + AMP + H(+). The protein operates within phytoalexin biosynthesis; 3,4',5-trihydroxystilbene biosynthesis; 3,4',5-trihydroxystilbene from trans-4-coumarate: step 1/2. Produces CoA thioesters of a variety of hydroxy- and methoxy-substituted cinnamic acids, which are used to synthesize several phenylpropanoid-derived compounds, including anthocyanins, flavonoids, isoflavonoids, coumarins, lignin, suberin and wall-bound phenolics. Follows a two-step reaction mechanism, wherein the carboxylate substrate first undergoes adenylation by ATP, followed by a thioesterification in the presence of CoA to yield the final CoA thioesters. The chain is 4-coumarate--CoA ligase 1 from Arabidopsis thaliana (Mouse-ear cress).